The primary structure comprises 119 residues: Large ribosomal subunit protein uL18 (119 aa).

Belongs to the universal ribosomal protein uL18 family. As to quaternary structure, part of the 50S ribosomal subunit; part of the 5S rRNA/L5/L18/L25 subcomplex. Contacts the 5S and 23S rRNAs.

In terms of biological role, this is one of the proteins that bind and probably mediate the attachment of the 5S RNA into the large ribosomal subunit, where it forms part of the central protuberance. This Tropheryma whipplei (strain TW08/27) (Whipple's bacillus) protein is Large ribosomal subunit protein uL18.